A 1372-amino-acid chain; its full sequence is DNA-directed RNA polymerase subunit beta' (1372 aa).

4 residues coordinate Zn(2+): Cys-69, Cys-71, Cys-84, and Cys-87. Asp-460, Asp-462, and Asp-464 together coordinate Mg(2+). Residues Cys-808, Cys-882, Cys-889, and Cys-892 each coordinate Zn(2+).

Belongs to the RNA polymerase beta' chain family. As to quaternary structure, the RNAP catalytic core consists of 2 alpha, 1 beta, 1 beta' and 1 omega subunit. When a sigma factor is associated with the core the holoenzyme is formed, which can initiate transcription. Mg(2+) serves as cofactor. The cofactor is Zn(2+).

It carries out the reaction RNA(n) + a ribonucleoside 5'-triphosphate = RNA(n+1) + diphosphate. In terms of biological role, DNA-dependent RNA polymerase catalyzes the transcription of DNA into RNA using the four ribonucleoside triphosphates as substrates. This Rickettsia typhi (strain ATCC VR-144 / Wilmington) protein is DNA-directed RNA polymerase subunit beta'.